A 214-amino-acid polypeptide reads, in one-letter code: ATP-dependent Clp protease proteolytic subunit 3 (214 aa).

The Nucleophile role is filled by Ser-106. His-131 is an active-site residue.

It belongs to the peptidase S14 family. In terms of assembly, fourteen ClpP subunits assemble into 2 heptameric rings which stack back to back to give a disk-like structure with a central cavity, resembling the structure of eukaryotic proteasomes.

It is found in the cytoplasm. The enzyme catalyses Hydrolysis of proteins to small peptides in the presence of ATP and magnesium. alpha-casein is the usual test substrate. In the absence of ATP, only oligopeptides shorter than five residues are hydrolyzed (such as succinyl-Leu-Tyr-|-NHMec, and Leu-Tyr-Leu-|-Tyr-Trp, in which cleavage of the -Tyr-|-Leu- and -Tyr-|-Trp bonds also occurs).. Functionally, cleaves peptides in various proteins in a process that requires ATP hydrolysis. Has a chymotrypsin-like activity. Plays a major role in the degradation of misfolded proteins. In Trichormus variabilis (strain ATCC 29413 / PCC 7937) (Anabaena variabilis), this protein is ATP-dependent Clp protease proteolytic subunit 3.